The chain runs to 329 residues: Malate dehydrogenase (329 aa).

12-18 (GAAGQIG) provides a ligand contact to NAD(+). The substrate site is built by Arg95 and Arg101. NAD(+)-binding positions include Asn108, Gln115, and 132 to 134 (VGN). Residues Asn134 and Arg165 each contribute to the substrate site. Residue His190 is the Proton acceptor of the active site.

Belongs to the LDH/MDH superfamily. MDH type 2 family.

The catalysed reaction is (S)-malate + NAD(+) = oxaloacetate + NADH + H(+). Functionally, catalyzes the reversible oxidation of malate to oxaloacetate. The chain is Malate dehydrogenase from Polynucleobacter asymbioticus (strain DSM 18221 / CIP 109841 / QLW-P1DMWA-1) (Polynucleobacter necessarius subsp. asymbioticus).